The primary structure comprises 658 residues: Staphylocoagulase (658 aa).

The signal sequence occupies residues 1–26 (MKKQIISLGALAVASSLFTWDNKADA). 4 stretches are compositionally biased toward polar residues: residues 391–406 (MEQNRPSLSDNYTQPT), 428–440 (GTESTLKGIQGES), 499–514 (PSETNAYNVTTNQDGT), and 521–531 (PTQNKPSETNA). Residues 391–531 (MEQNRPSLSD…TQNKPSETNA (141 aa)) form a disordered region. Repeat copies occupy residues 492 to 518 (ARPRFNKPSETNAYNVTTNQDGTVSYG), 519 to 545 (ARPTQNKPSETNAYNVTTHANGQVSYG), 546 to 572 (ARPTQNKPSKTNAYNVTTHANGQVSYG), 573 to 599 (ARPTQKKPSKTNAYNVTTHANGQVSYG), 600 to 626 (ARPTYKKPSETNAYNVTTHANGQVSYG), and 627 to 653 (ARPTQKKPSETNAYNVTTHADGTATYG). The interval 492–653 (ARPRFNKPSE…THADGTATYG (162 aa)) is 6 X 27 AA tandem repeats of A-R-P-[RT]-[FQY]-[NK]-K-P-S-[EK]-T-N-A-Y-N-V-T-T-[NH]-[QA]-[DN]-G-[TQ]-[VA]-[ST]-Y-G. Residues 619–658 (ANGQVSYGARPTQKKPSETNAYNVTTHADGTATYGPRVTK) are disordered. Over residues 636-646 (ETNAYNVTTHA) the composition is skewed to polar residues.

The protein belongs to the staphylocoagulase family.

Its function is as follows. Staphylocoagulase is an extracellular protein which specifically forms a complex with human prothrombin. This complex named staphylothrombin can clot fibrinogen without any proteolytic cleavage of prothrombin. The polypeptide is Staphylocoagulase (Staphylococcus aureus).